Reading from the N-terminus, the 328-residue chain is Homeobox protein Hox-D1 (328 aa).

Positions 204 to 209 (TFEWMK) match the Antp-type hexapeptide motif. The homeobox DNA-binding region spans 229–288 (SSAIRTNFSTKQLTELEKEFHFNKYLTRARRIEIANCLHLNDTQVKIWFQNRRMKQKKRE). The segment at 305–328 (PLSGTTPTKFIKNPGSPSQSQEPS) is disordered. A compositionally biased stretch (polar residues) spans 319-328 (GSPSQSQEPS).

The protein belongs to the Antp homeobox family. Labial subfamily.

The protein resides in the nucleus. Its function is as follows. Sequence-specific transcription factor which is part of a developmental regulatory system that provides cells with specific positional identities on the anterior-posterior axis. Acts on the anterior body structures. This chain is Homeobox protein Hox-D1 (HOXD1), found in Homo sapiens (Human).